The sequence spans 440 residues: Proline--tRNA ligase (440 aa).

This sequence belongs to the class-II aminoacyl-tRNA synthetase family. ProS type 2 subfamily. Homodimer.

It is found in the cytoplasm. The catalysed reaction is tRNA(Pro) + L-proline + ATP = L-prolyl-tRNA(Pro) + AMP + diphosphate. Catalyzes the attachment of proline to tRNA(Pro) in a two-step reaction: proline is first activated by ATP to form Pro-AMP and then transferred to the acceptor end of tRNA(Pro). The sequence is that of Proline--tRNA ligase from Xanthobacter autotrophicus (strain ATCC BAA-1158 / Py2).